Reading from the N-terminus, the 338-residue chain is Tetraacyldisaccharide 4'-kinase (338 aa).

Residue histidine 51 to threonine 58 coordinates ATP.

This sequence belongs to the LpxK family.

The enzyme catalyses a lipid A disaccharide + ATP = a lipid IVA + ADP + H(+). The protein operates within glycolipid biosynthesis; lipid IV(A) biosynthesis; lipid IV(A) from (3R)-3-hydroxytetradecanoyl-[acyl-carrier-protein] and UDP-N-acetyl-alpha-D-glucosamine: step 6/6. Transfers the gamma-phosphate of ATP to the 4'-position of a tetraacyldisaccharide 1-phosphate intermediate (termed DS-1-P) to form tetraacyldisaccharide 1,4'-bis-phosphate (lipid IVA). This chain is Tetraacyldisaccharide 4'-kinase, found in Rhodopseudomonas palustris (strain BisB5).